The sequence spans 459 residues: V-type ATP synthase beta chain (459 aa).

It belongs to the ATPase alpha/beta chains family.

Functionally, produces ATP from ADP in the presence of a proton gradient across the membrane. The V-type beta chain is a regulatory subunit. The chain is V-type ATP synthase beta chain from Clostridium botulinum (strain Alaska E43 / Type E3).